The primary structure comprises 467 residues: L-histidine transporter HutT (467 aa).

The next 13 helical transmembrane spans lie at 18 to 38 (FMAL…SAIQ), 39 to 59 (MAGP…FMVM), 71 to 91 (VAGS…GFIL), 99 to 119 (MVIV…FWFP), 125 to 145 (IWVL…VKVF), 155 to 175 (LKVG…AFGF), 200 to 220 (VGGL…IEII), 245 to 265 (ILLF…WPQI), 280 to 300 (GIGS…ISAI), 334 to 354 (WMTV…NYLI), 358 to 378 (VFLL…LMIL), 402 to 422 (FWPY…GVLG), and 429 to 449 (AALI…LLWC).

Belongs to the amino acid-polyamine-organocation (APC) superfamily. Amino acid transporter (AAT) (TC 2.A.3.1) family.

It localises to the cell inner membrane. The enzyme catalyses L-histidine(out) + n H(+)(out) = L-histidine(in) + n H(+)(in). Transport activity is inhibited by the proton ionophores carbonyl cyanide m-chlorophenyl hydrazine (CCCP) and 2,4-dinitrophenol (DNP), but not by valinomycin, nigericin and nonactin. Uptake is reduced in the presence of the sulfhydryl reagent N-ethylmaleimide (NEM). Uptake is not affected by arginine, lysine, proline or compounds structurally related to histidine such as imidazole, 3-amino-1,2,4-triazole and urocanate. Only 1,2,4-triazolyl-3-alanine reduces the rate of L-histidine uptake significantly. Functionally, major high-affinity histidine transporter. Binds and catalyzes the uptake of histidine into the cell. Functions as an histidine:proton symporter with high specificity for histidine. The sequence is that of L-histidine transporter HutT from Pseudomonas putida (strain ATCC 47054 / DSM 6125 / CFBP 8728 / NCIMB 11950 / KT2440).